A 348-amino-acid chain; its full sequence is MKFLDQARIYIRSGDGGAGCLSFRHEKFIEFGGPDGGDGGRGGDVVALCVEGLNTLIDYRYQQHFKAKTGTHGMGKNRAGARGADCILKVPAGTQIFDEDGETLIADLTEIGQSVCLARGGNGGFGNAHFKTSTNQAPRRANPGQEGEEMTLWLRLKLIADAGLVGLPNAGKSTFLSTVSAARPKIADYPFTTLHPQLGVVAYGDREFVLADIPGLIEGAHEGVGLGDRFLGHVERCRVLLHLVDAGCEHAGKAYKTIRKELAAYGNGLDEKPEIVALSKIDTVDAETLKNQMARLKRAAKRTPLKLSAATHTNLTETLQSLLAAIDAAGAAQEAAAEPAATSWHPCD.

The Obg domain occupies 1 to 159 (MKFLDQARIY…MTLWLRLKLI (159 aa)). The 168-residue stretch at 160 to 327 (ADAGLVGLPN…TLQSLLAAID (168 aa)) folds into the OBG-type G domain. Residues 166 to 173 (GLPNAGKS), 191 to 195 (FTTLH), 212 to 215 (DIPG), 279 to 282 (SKID), and 308 to 310 (SAA) each bind GTP. The Mg(2+) site is built by Ser-173 and Thr-193.

The protein belongs to the TRAFAC class OBG-HflX-like GTPase superfamily. OBG GTPase family. Monomer. The cofactor is Mg(2+).

It is found in the cytoplasm. Functionally, an essential GTPase which binds GTP, GDP and possibly (p)ppGpp with moderate affinity, with high nucleotide exchange rates and a fairly low GTP hydrolysis rate. Plays a role in control of the cell cycle, stress response, ribosome biogenesis and in those bacteria that undergo differentiation, in morphogenesis control. The sequence is that of GTPase Obg from Beijerinckia indica subsp. indica (strain ATCC 9039 / DSM 1715 / NCIMB 8712).